A 546-amino-acid chain; its full sequence is Probable protein kinase UbiB (546 aa).

The 379-residue stretch at 124–502 (DFDIKPLASA…HVRQGQSRYL (379 aa)) folds into the Protein kinase domain. Residues 130–138 (LASASIAQV) and K153 each bind ATP. D288 functions as the Proton acceptor in the catalytic mechanism. A run of 2 helical transmembrane segments spans residues 501–521 (YLLG…VSRP) and 522–542 (EWGL…FVGW).

The protein belongs to the ABC1 family. UbiB subfamily.

It is found in the cell inner membrane. It functions in the pathway cofactor biosynthesis; ubiquinone biosynthesis [regulation]. In terms of biological role, is probably a protein kinase regulator of UbiI activity which is involved in aerobic coenzyme Q (ubiquinone) biosynthesis. The chain is Probable protein kinase UbiB from Escherichia fergusonii (strain ATCC 35469 / DSM 13698 / CCUG 18766 / IAM 14443 / JCM 21226 / LMG 7866 / NBRC 102419 / NCTC 12128 / CDC 0568-73).